A 304-amino-acid polypeptide reads, in one-letter code: Elongation factor Ts (304 aa).

An involved in Mg(2+) ion dislocation from EF-Tu region spans residues T80–V83.

It belongs to the EF-Ts family.

It is found in the cytoplasm. Its function is as follows. Associates with the EF-Tu.GDP complex and induces the exchange of GDP to GTP. It remains bound to the aminoacyl-tRNA.EF-Tu.GTP complex up to the GTP hydrolysis stage on the ribosome. This Clostridium tetani (strain Massachusetts / E88) protein is Elongation factor Ts.